A 455-amino-acid chain; its full sequence is Probable ATP-dependent RNA helicase DDX47 (455 aa).

The interval 1–21 (MAADEEPDSPSGALQTAAEEE) is disordered. Position 2 is an N-acetylalanine (Ala-2). Phosphoserine is present on Ser-9. Positions 24–52 (KTFKDLGVTDVLCEACDQLGWAKPTKIQI) match the Q motif motif. The Helicase ATP-binding domain maps to 55-226 (IPLALQGRDI…RAALKNPVKC (172 aa)). 68–75 (AETGSGKT) lines the ATP pocket. Thr-149 carries the post-translational modification Phosphothreonine. A DEAD box motif is present at residues 174-177 (DEAD). Positions 237 to 397 (KLQQYYLFIP…VFPTQDEEVM (161 aa)) constitute a Helicase C-terminal domain. The segment at 412–455 (MELREHGEKKKRKREDAGDDDDKEGAIGVRNKVAGGKMKKRKGR) is disordered.

This sequence belongs to the DEAD box helicase family. DDX47/RRP3 subfamily. As to quaternary structure, interacts with AGO1 and AGO2. Interacts with GABARAP. Interacts with NOL8; the interaction is RNA-dependent.

It localises to the nucleus. It is found in the nucleolus. It catalyses the reaction ATP + H2O = ADP + phosphate + H(+). In terms of biological role, involved in apoptosis. May have a role in rRNA processing and mRNA splicing. Associates with pre-rRNA precursors. The polypeptide is Probable ATP-dependent RNA helicase DDX47 (Ddx47) (Mus musculus (Mouse)).